We begin with the raw amino-acid sequence, 428 residues long: Peptidase B (428 aa).

2 residues coordinate Mn(2+): lysine 195 and aspartate 200. The active site involves lysine 207. Positions 218, 277, and 279 each coordinate Mn(2+). Arginine 281 is an active-site residue.

Belongs to the peptidase M17 family. As to quaternary structure, homohexamer. Requires Mn(2+) as cofactor.

The protein resides in the cytoplasm. The catalysed reaction is Release of an N-terminal amino acid, Xaa, from a peptide or arylamide. Xaa is preferably Glu or Asp but may be other amino acids, including Leu, Met, His, Cys and Gln.. Its function is as follows. Probably plays an important role in intracellular peptide degradation. The protein is Peptidase B of Klebsiella pneumoniae subsp. pneumoniae (strain ATCC 700721 / MGH 78578).